An 85-amino-acid chain; its full sequence is Putative regulatory protein DICTH_1339 (85 aa).

This sequence belongs to the RemA family.

This Dictyoglomus thermophilum (strain ATCC 35947 / DSM 3960 / H-6-12) protein is Putative regulatory protein DICTH_1339.